The following is a 244-amino-acid chain: Purine nucleoside phosphorylase HI_0175 (244 aa).

Residues His-70, Cys-105, and His-122 each coordinate Zn(2+).

Belongs to the purine nucleoside phosphorylase YfiH/LACC1 family. As to quaternary structure, homodimer. Cu(2+) serves as cofactor. The cofactor is Zn(2+).

The enzyme catalyses adenosine + phosphate = alpha-D-ribose 1-phosphate + adenine. It catalyses the reaction S-methyl-5'-thioadenosine + phosphate = 5-(methylsulfanyl)-alpha-D-ribose 1-phosphate + adenine. It carries out the reaction inosine + phosphate = alpha-D-ribose 1-phosphate + hypoxanthine. The catalysed reaction is adenosine + H2O + H(+) = inosine + NH4(+). In terms of biological role, purine nucleoside enzyme that catalyzes the phosphorolysis of adenosine and inosine nucleosides, yielding D-ribose 1-phosphate and the respective free bases, adenine and hypoxanthine. Also catalyzes the phosphorolysis of S-methyl-5'-thioadenosine into adenine and S-methyl-5-thio-alpha-D-ribose 1-phosphate. Also has adenosine deaminase activity. The chain is Purine nucleoside phosphorylase HI_0175 from Haemophilus influenzae (strain ATCC 51907 / DSM 11121 / KW20 / Rd).